The chain runs to 219 residues: 2-C-methyl-D-erythritol 4-phosphate cytidylyltransferase (219 aa).

It belongs to the IspD/TarI cytidylyltransferase family. IspD subfamily.

The catalysed reaction is 2-C-methyl-D-erythritol 4-phosphate + CTP + H(+) = 4-CDP-2-C-methyl-D-erythritol + diphosphate. Its pathway is isoprenoid biosynthesis; isopentenyl diphosphate biosynthesis via DXP pathway; isopentenyl diphosphate from 1-deoxy-D-xylulose 5-phosphate: step 2/6. Catalyzes the formation of 4-diphosphocytidyl-2-C-methyl-D-erythritol from CTP and 2-C-methyl-D-erythritol 4-phosphate (MEP). The protein is 2-C-methyl-D-erythritol 4-phosphate cytidylyltransferase of Bacteroides fragilis (strain ATCC 25285 / DSM 2151 / CCUG 4856 / JCM 11019 / LMG 10263 / NCTC 9343 / Onslow / VPI 2553 / EN-2).